A 302-amino-acid chain; its full sequence is Bifunctional protein FolD (302 aa).

Residues glycine 165–serine 167, serine 190, and isoleucine 231 each bind NADP(+).

It belongs to the tetrahydrofolate dehydrogenase/cyclohydrolase family. Homodimer.

It catalyses the reaction (6R)-5,10-methylene-5,6,7,8-tetrahydrofolate + NADP(+) = (6R)-5,10-methenyltetrahydrofolate + NADPH. The enzyme catalyses (6R)-5,10-methenyltetrahydrofolate + H2O = (6R)-10-formyltetrahydrofolate + H(+). The protein operates within one-carbon metabolism; tetrahydrofolate interconversion. Functionally, catalyzes the oxidation of 5,10-methylenetetrahydrofolate to 5,10-methenyltetrahydrofolate and then the hydrolysis of 5,10-methenyltetrahydrofolate to 10-formyltetrahydrofolate. The chain is Bifunctional protein FolD from Prochlorococcus marinus (strain MIT 9303).